The following is a 158-amino-acid chain: Cyclic pyranopterin monophosphate synthase (158 aa).

Residues 74 to 76 and 112 to 113 each bind substrate; these read MCH and ME. Aspartate 127 is a catalytic residue.

The protein belongs to the MoaC family. Homohexamer; trimer of dimers.

The enzyme catalyses (8S)-3',8-cyclo-7,8-dihydroguanosine 5'-triphosphate = cyclic pyranopterin phosphate + diphosphate. It participates in cofactor biosynthesis; molybdopterin biosynthesis. Its function is as follows. Catalyzes the conversion of (8S)-3',8-cyclo-7,8-dihydroguanosine 5'-triphosphate to cyclic pyranopterin monophosphate (cPMP). This chain is Cyclic pyranopterin monophosphate synthase, found in Thermoanaerobacter pseudethanolicus (strain ATCC 33223 / 39E) (Clostridium thermohydrosulfuricum).